Consider the following 412-residue polypeptide: Probable serine/threonine-protein kinase PBL10 (412 aa).

Gly-2 is lipidated: N-myristoyl glycine. The S-palmitoyl cysteine moiety is linked to residue Cys-4. The segment at 15–45 (GASPKYMSSEANDSLGSKSSSVSIRTNPRTE) is disordered. The segment covering 23-43 (SEANDSLGSKSSSVSIRTNPR) has biased composition (polar residues). Thr-58 is modified (phosphothreonine). The Protein kinase domain occupies 69–356 (FRPDSVLGEG…VVSHLEHIQT (288 aa)). Residues 75 to 83 (LGEGGFGSV) and Lys-107 contribute to the ATP site. At Tyr-152 the chain carries Phosphotyrosine. Residue Asp-204 is the Proton acceptor of the active site. A phosphoserine mark is found at Ser-208 and Ser-238. Residues Thr-239 and Thr-244 each carry the phosphothreonine modification. The residue at position 252 (Tyr-252) is a Phosphotyrosine.

Belongs to the protein kinase superfamily. Ser/Thr protein kinase family. Interacts with the Xanthomonas campestris effector XopAC/AvrAC. Expressed in stomatal guard cells of leaves.

The protein resides in the cell membrane. It catalyses the reaction L-seryl-[protein] + ATP = O-phospho-L-seryl-[protein] + ADP + H(+). It carries out the reaction L-threonyl-[protein] + ATP = O-phospho-L-threonyl-[protein] + ADP + H(+). Its function is as follows. Possible bi-functional kinase. In vitro, it exhibits serine/threonine activity. In vivo, can phosphorylate tyrosine residues of limited substrates. May be involved in plant defense signaling. Required for full light-induced stomatal opening. This is Probable serine/threonine-protein kinase PBL10 from Arabidopsis thaliana (Mouse-ear cress).